A 383-amino-acid chain; its full sequence is Aquaporin-5 (383 aa).

The Cytoplasmic portion of the chain corresponds to 1 to 46 (MSVTTLNGQPTLNISGPGQTALSRLDPLKKVFTKFFSSIPQKVRGH). Residues 47 to 67 (VVAVIGELIGTTAFLFIAFSA) traverse the membrane as a helical segment. Residues 68–93 (AEVALASANDNKGDKVSYETKSISTT) lie on the Extracellular side of the membrane. The chain crosses the membrane as a helical span at residues 94 to 114 (QILFIAFGAGISLVVNAWTFF). Arg-115 is a topological domain (cytoplasmic). A helical membrane pass occupies residues 116 to 136 (ISGGLFDPAVSIALFFVGAID). Positions 122–124 (DPA) match the NPA 1 motif. The Extracellular segment spans residues 137 to 140 (LTRC). Residues 141–161 (VLLCIAQCLGAIAASAMAYGL) form a helical membrane-spanning segment. The Cytoplasmic segment spans residues 162-180 (YHGGLHTATTLKPGMSPAQ). Residues 181 to 201 (GVIVEMILTCQLCFTVLMLAA) form a helical membrane-spanning segment. At 202-207 (EKHEAT) the chain is on the extracellular side. Residues 208-228 (FLAPLGIGLSVFIGELAGVFW) form a helical membrane-spanning segment. Over 229-252 (TGGSMNPARSLGPAVVTLSFPSYH) the chain is Cytoplasmic. The NPA 2 motif lies at 234 to 236 (NPA). The helical transmembrane segment at 253–273 (WIYWVGPIAGAGLASIIYKLI) threads the bilayer. Over 274–383 (KALEYETAQL…DGFFGEMYAD (110 aa)) the chain is Extracellular. The span at 332–349 (ARKSSSLVPTKSTKSGNS) shows a compositional bias: polar residues. The segment at 332–383 (ARKSSSLVPTKSTKSGNSEVKKTETVVEEPAKTQPKPAPAADDGFFGEMYAD) is disordered. Over residues 350–362 (EVKKTETVVEEPA) the composition is skewed to basic and acidic residues. Low complexity predominate over residues 363-372 (KTQPKPAPAA).

This sequence belongs to the MIP/aquaporin (TC 1.A.8) family.

The protein localises to the membrane. It catalyses the reaction H2O(in) = H2O(out). In terms of biological role, water channel required to facilitate the transport of water across membranes. May play a role in the vegetative growth. This Botryotinia fuckeliana (strain B05.10) (Noble rot fungus) protein is Aquaporin-5.